The primary structure comprises 343 residues: Single-pass membrane and coiled-coil domain-containing protein 2 (343 aa).

Over residues 86–99 the composition is skewed to basic and acidic residues; sequence EHDQDLSKQDKQET. Positions 86–108 are disordered; it reads EHDQDLSKQDKQETDVDEDPQAS. Residues 152 to 238 are a coiled coil; the sequence is TEKIDNIIKK…SAKLRMYQME (87 aa). A helical membrane pass occupies residues 284–304; the sequence is IFIMFDVLTVTGLLCYILFFG.

The protein resides in the membrane. The chain is Single-pass membrane and coiled-coil domain-containing protein 2 (SMCO2) from Homo sapiens (Human).